A 236-amino-acid polypeptide reads, in one-letter code: ATP synthase subunit a (236 aa).

Transmembrane regions (helical) follow at residues 17 to 37 (WTNL…LFGL), 76 to 96 (SFFV…GLII), 113 to 133 (PVVT…AGVA), 170 to 190 (IFGN…MAFS), and 196 to 216 (MIVS…IGAI).

This sequence belongs to the ATPase A chain family. F-type ATPases have 2 components, CF(1) - the catalytic core - and CF(0) - the membrane proton channel. CF(1) has five subunits: alpha(3), beta(3), gamma(1), delta(1), epsilon(1). CF(0) has three main subunits: a(1), b(2) and c(9-12). The alpha and beta chains form an alternating ring which encloses part of the gamma chain. CF(1) is attached to CF(0) by a central stalk formed by the gamma and epsilon chains, while a peripheral stalk is formed by the delta and b chains.

It is found in the cell membrane. Its function is as follows. Key component of the proton channel; it plays a direct role in the translocation of protons across the membrane. The sequence is that of ATP synthase subunit a from Limosilactobacillus fermentum (strain NBRC 3956 / LMG 18251) (Lactobacillus fermentum).